The primary structure comprises 60 residues: Large ribosomal subunit protein uL30 (60 aa).

This sequence belongs to the universal ribosomal protein uL30 family. In terms of assembly, part of the 50S ribosomal subunit.

This is Large ribosomal subunit protein uL30 from Cupriavidus necator (strain ATCC 17699 / DSM 428 / KCTC 22496 / NCIMB 10442 / H16 / Stanier 337) (Ralstonia eutropha).